The following is a 493-amino-acid chain: Glutamate--tRNA ligase (493 aa).

A 'HIGH' region motif is present at residues 10-20 (PSPTGDPHVGT). Residues 251 to 255 (KLSKR) carry the 'KMSKS' region motif. Lys-254 contacts ATP.

The protein belongs to the class-I aminoacyl-tRNA synthetase family. Glutamate--tRNA ligase type 1 subfamily. As to quaternary structure, monomer.

Its subcellular location is the cytoplasm. The enzyme catalyses tRNA(Glu) + L-glutamate + ATP = L-glutamyl-tRNA(Glu) + AMP + diphosphate. Its function is as follows. Catalyzes the attachment of glutamate to tRNA(Glu) in a two-step reaction: glutamate is first activated by ATP to form Glu-AMP and then transferred to the acceptor end of tRNA(Glu). In Pseudomonas putida (strain W619), this protein is Glutamate--tRNA ligase.